The chain runs to 657 residues: tRNA 5-methylaminomethyl-2-thiouridine biosynthesis bifunctional protein MnmC (657 aa).

Residues 1 to 235 (MSDAHNAQLD…KREMLAGPFQ (235 aa)) form a tRNA (mnm(5)s(2)U34)-methyltransferase region. The segment at 261–657 (IGAGLAGCAT…QLIRGTGSPT (397 aa)) is FAD-dependent cmnm(5)s(2)U34 oxidoreductase.

It in the N-terminal section; belongs to the methyltransferase superfamily. tRNA (mnm(5)s(2)U34)-methyltransferase family. In the C-terminal section; belongs to the DAO family. It depends on FAD as a cofactor.

It is found in the cytoplasm. It carries out the reaction 5-aminomethyl-2-thiouridine(34) in tRNA + S-adenosyl-L-methionine = 5-methylaminomethyl-2-thiouridine(34) in tRNA + S-adenosyl-L-homocysteine + H(+). Catalyzes the last two steps in the biosynthesis of 5-methylaminomethyl-2-thiouridine (mnm(5)s(2)U) at the wobble position (U34) in tRNA. Catalyzes the FAD-dependent demodification of cmnm(5)s(2)U34 to nm(5)s(2)U34, followed by the transfer of a methyl group from S-adenosyl-L-methionine to nm(5)s(2)U34, to form mnm(5)s(2)U34. The polypeptide is tRNA 5-methylaminomethyl-2-thiouridine biosynthesis bifunctional protein MnmC (Ectopseudomonas mendocina (strain ymp) (Pseudomonas mendocina)).